Reading from the N-terminus, the 51-residue chain is uncharacterized protein (51 aa).

The protein to E.coli YdfA.

This is an uncharacterized protein from Escherichia coli O157:H7.